Here is a 359-residue protein sequence, read N- to C-terminus: N-acetyl-gamma-glutamyl-phosphate reductase (359 aa).

The active site involves cysteine 162.

This sequence belongs to the NAGSA dehydrogenase family. Type 1 subfamily.

The protein resides in the cytoplasm. It catalyses the reaction N-acetyl-L-glutamate 5-semialdehyde + phosphate + NADP(+) = N-acetyl-L-glutamyl 5-phosphate + NADPH + H(+). The protein operates within amino-acid biosynthesis; L-arginine biosynthesis; N(2)-acetyl-L-ornithine from L-glutamate: step 3/4. Functionally, catalyzes the NADPH-dependent reduction of N-acetyl-5-glutamyl phosphate to yield N-acetyl-L-glutamate 5-semialdehyde. This Prochlorococcus marinus (strain MIT 9211) protein is N-acetyl-gamma-glutamyl-phosphate reductase.